We begin with the raw amino-acid sequence, 256 residues long: Late embryogenesis abundant protein 32 (256 aa).

A compositionally biased stretch (basic and acidic residues) spans 1 to 14 (MSQEQPRRPREPVK). A disordered region spans residues 1–20 (MSQEQPRRPREPVKYGDVFE). Positions 5–9 (QPRRP) match the Nuclear localization signal (NLS) motif. 3 SMP domains span residues 13–66 (VKYG…TTNI), 130–187 (ITIG…HNAT), and 195–253 (IKLR…LNER).

The protein belongs to the LEA type SMP family. As to expression, embryo specific, only in dry mature seeds. Expressed at low levels.

It localises to the cytoplasm. It is found in the nucleus. LEA proteins are late embryonic proteins abundant in higher plant seed embryos. The function of those proteins is not known. This is Late embryogenesis abundant protein 32 from Arabidopsis thaliana (Mouse-ear cress).